Here is a 432-residue protein sequence, read N- to C-terminus: 3-phosphoshikimate 1-carboxyvinyltransferase (432 aa).

3-phosphoshikimate contacts are provided by lysine 23, serine 24, and arginine 28. Residue lysine 23 participates in phosphoenolpyruvate binding. The phosphoenolpyruvate site is built by glycine 95 and arginine 123. Residues serine 167, glutamine 169, aspartate 317, and lysine 344 each contribute to the 3-phosphoshikimate site. A phosphoenolpyruvate-binding site is contributed by glutamine 169. The active-site Proton acceptor is the aspartate 317. 2 residues coordinate phosphoenolpyruvate: arginine 348 and arginine 390.

This sequence belongs to the EPSP synthase family. Monomer.

The protein localises to the cytoplasm. It catalyses the reaction 3-phosphoshikimate + phosphoenolpyruvate = 5-O-(1-carboxyvinyl)-3-phosphoshikimate + phosphate. It participates in metabolic intermediate biosynthesis; chorismate biosynthesis; chorismate from D-erythrose 4-phosphate and phosphoenolpyruvate: step 6/7. Functionally, catalyzes the transfer of the enolpyruvyl moiety of phosphoenolpyruvate (PEP) to the 5-hydroxyl of shikimate-3-phosphate (S3P) to produce enolpyruvyl shikimate-3-phosphate and inorganic phosphate. This Staphylococcus saprophyticus subsp. saprophyticus (strain ATCC 15305 / DSM 20229 / NCIMB 8711 / NCTC 7292 / S-41) protein is 3-phosphoshikimate 1-carboxyvinyltransferase.